The primary structure comprises 236 residues: MILLVSPKDVAEAYEAIEGGADIIDVKNPPEGSLGANFPWVIKEIREATPEGRLVSAAIGDVPYKPGTVTLAALGATVSGADYIKVGLYGTRSYQEAVDVMKNVTKAVKYVGEDKIVVAAGYADAYRIGGVDPLVIPKVARDAGCDVAMLDTAVKDGKTLFDHMSIELLKEFVEETHKYGMKCALAGSIKIEEIPMLKEIGCDIVGVRGAACTKGDRNEGRIQKDLVKEIVKVCKE.

Catalysis depends on Lys27, which acts as the Schiff-base intermediate with substrate. The Proton acceptor role is filled by Lys85.

It belongs to the MfnB family.

The enzyme catalyses 2 D-glyceraldehyde 3-phosphate = 4-(hydroxymethyl)-2-furancarboxaldehyde phosphate + phosphate + 2 H2O. It functions in the pathway cofactor biosynthesis; methanofuran biosynthesis. Catalyzes the formation of 4-(hydroxymethyl)-2-furancarboxaldehyde phosphate (4-HFC-P) from two molecules of glyceraldehyde-3-P (GA-3-P). In Methanococcus maripaludis (strain C5 / ATCC BAA-1333), this protein is (5-formylfuran-3-yl)methyl phosphate synthase.